The chain runs to 241 residues: Small ribosomal subunit protein uS3 (241 aa).

A KH type-2 domain is found at 39–108; that stretch reads IREGVLKLLK…NLKVEVKVIE (70 aa). The tract at residues 215-241 is disordered; that stretch reads SQRVSEKAPMNNDRRFNNKNNNRGGRK. Positions 232 to 241 are enriched in low complexity; the sequence is NKNNNRGGRK.

It belongs to the universal ribosomal protein uS3 family. As to quaternary structure, part of the 30S ribosomal subunit. Forms a tight complex with proteins S10 and S14.

Functionally, binds the lower part of the 30S subunit head. Binds mRNA in the 70S ribosome, positioning it for translation. This Mesoplasma florum (Acholeplasma florum) protein is Small ribosomal subunit protein uS3.